The sequence spans 171 residues: Shikimate kinase (171 aa).

14–19 contacts ATP; it reads GAGKST. Residue Ser18 coordinates Mg(2+). Asp36, Arg60, and Gly82 together coordinate substrate. Arg120 is an ATP binding site. Arg139 contributes to the substrate binding site. Gln156 is an ATP binding site.

It belongs to the shikimate kinase family. In terms of assembly, monomer. Mg(2+) serves as cofactor.

It localises to the cytoplasm. The enzyme catalyses shikimate + ATP = 3-phosphoshikimate + ADP + H(+). The protein operates within metabolic intermediate biosynthesis; chorismate biosynthesis; chorismate from D-erythrose 4-phosphate and phosphoenolpyruvate: step 5/7. In terms of biological role, catalyzes the specific phosphorylation of the 3-hydroxyl group of shikimic acid using ATP as a cosubstrate. The protein is Shikimate kinase of Shewanella woodyi (strain ATCC 51908 / MS32).